Here is a 511-residue protein sequence, read N- to C-terminus: MRKIDIFDTTLRDGEQSAGINLNTAEKIEIAKQLERLGVTIIEAGFPASSPGDFDAVHRIAETVKNSVVTGLARCIQKDIDTTWEAIKGAQQPHIHIFLATSPIHMEYKLKKSPEQVIEQAVEAVKYAKKYFPLVQWSAEDAFRSDREFLVRIMNEVVTAGATTINVPDTVGYASPYEYGALFKYLLENVKGADKVKFSAHCHDDLGMATANTLAAIENGAAQVEGTINGIGERAGNVALEEIAVALHIRKDYYQVETGIQLQEIKRTSQLVSKLTNVVIQPNKAIVGRNAFAHESGIHQDGVLKNPETYEIISPALIGEGEIPLVLGKHSGRAAFRDRAETLGFDLSDEKLNKAFVEFKKLADRKKEITEEDLLTLLTEQQIQLEDVPLFELKMVQVQYGTENIPTATAIVLTPEGLEKTVVATGAGSVEAIFNTLEQLVPNAVHVIDYRVTSVGKGRDALGEAVVNIRYDHVSTTGRNSSQDVLEASAKAYLNAINRHLIKESLRAHPV.

In terms of domain architecture, Pyruvate carboxyltransferase spans Ile-4–Lys-266. Mn(2+) contacts are provided by Asp-13, His-201, His-203, and Asn-237. Residues Glu-392–Val-511 are regulatory domain.

Belongs to the alpha-IPM synthase/homocitrate synthase family. LeuA type 1 subfamily. As to quaternary structure, homodimer. It depends on Mn(2+) as a cofactor.

Its subcellular location is the cytoplasm. The enzyme catalyses 3-methyl-2-oxobutanoate + acetyl-CoA + H2O = (2S)-2-isopropylmalate + CoA + H(+). It functions in the pathway amino-acid biosynthesis; L-leucine biosynthesis; L-leucine from 3-methyl-2-oxobutanoate: step 1/4. Catalyzes the condensation of the acetyl group of acetyl-CoA with 3-methyl-2-oxobutanoate (2-ketoisovalerate) to form 3-carboxy-3-hydroxy-4-methylpentanoate (2-isopropylmalate). In Lysinibacillus sphaericus (strain C3-41), this protein is 2-isopropylmalate synthase.